Reading from the N-terminus, the 363-residue chain is 3-methyl-D-ornithine--L-lysine ligase (363 aa).

Residue K10 coordinates ATP. 11–12 (LQ) contributes to the L-lysine binding site. ATP is bound by residues D31, 49 to 50 (DV), and 72 to 73 (EN). Position 72 (E72) interacts with L-lysine. ADP is bound by residues K104, K131, S138, and 160 to 163 (EEYV). Residues 169–171 (SLE) and D225 each bind D-ornithine. 3 residues coordinate Mg(2+): E227, E239, and D241. ADP is bound at residue E239. Residues 243 to 248 (RFPSQT) and E302 contribute to the D-ornithine site. Residues S246 and E302 each coordinate L-lysine.

The protein belongs to the PylC family. Requires Mg(2+) as cofactor.

The catalysed reaction is (3R)-3-methyl-D-ornithine + L-lysine + ATP = (3R)-3-methyl-D-ornithyl-N(6)-L-lysine + ADP + phosphate + H(+). It participates in amino-acid biosynthesis; L-pyrrolysine biosynthesis. Functionally, is required for the biosynthesis of pyrrolysine. Catalyzes the ATP-dependent ligation between (3R)-3-methyl-D-ornithine and L-lysine, leading to (3R)-3-methyl-D-ornithyl-N6-L-lysine. This is 3-methyl-D-ornithine--L-lysine ligase from Methanosarcina barkeri (strain Fusaro / DSM 804).